Here is a 244-residue protein sequence, read N- to C-terminus: 5-oxoprolinase subunit A (244 aa).

Belongs to the LamB/PxpA family. As to quaternary structure, forms a complex composed of PxpA, PxpB and PxpC.

It carries out the reaction 5-oxo-L-proline + ATP + 2 H2O = L-glutamate + ADP + phosphate + H(+). In terms of biological role, catalyzes the cleavage of 5-oxoproline to form L-glutamate coupled to the hydrolysis of ATP to ADP and inorganic phosphate. The sequence is that of 5-oxoprolinase subunit A from Escherichia coli O17:K52:H18 (strain UMN026 / ExPEC).